A 424-amino-acid polypeptide reads, in one-letter code: Adenylosuccinate synthetase (424 aa).

GTP is bound by residues 12 to 18 and 40 to 42; these read GDEGKGK and GHT. Catalysis depends on Asp13, which acts as the Proton acceptor. Residues Asp13 and Gly40 each contribute to the Mg(2+) site. Residues 13 to 16, 38 to 41, Thr130, Arg144, Asn220, Thr235, and Arg299 each bind IMP; these read DEGK and NAGH. The active-site Proton donor is His41. 295 to 301 provides a ligand contact to substrate; sequence VTTGRKR. GTP is bound by residues Arg301, 327-329, and 412-414; these read KLD and GTG.

The protein belongs to the adenylosuccinate synthetase family. Homodimer. Mg(2+) serves as cofactor.

It is found in the cytoplasm. It catalyses the reaction IMP + L-aspartate + GTP = N(6)-(1,2-dicarboxyethyl)-AMP + GDP + phosphate + 2 H(+). It functions in the pathway purine metabolism; AMP biosynthesis via de novo pathway; AMP from IMP: step 1/2. Its function is as follows. Plays an important role in the de novo pathway and in the salvage pathway of purine nucleotide biosynthesis. Catalyzes the first committed step in the biosynthesis of AMP from IMP. The protein is Adenylosuccinate synthetase (adB) of Emericella nidulans (strain FGSC A4 / ATCC 38163 / CBS 112.46 / NRRL 194 / M139) (Aspergillus nidulans).